The primary structure comprises 203 residues: ATP-dependent Clp protease proteolytic subunit 2 (203 aa).

Catalysis depends on Ser-98, which acts as the Nucleophile. The active site involves His-123.

This sequence belongs to the peptidase S14 family. In terms of assembly, fourteen ClpP subunits assemble into 2 heptameric rings which stack back to back to give a disk-like structure with a central cavity, resembling the structure of eukaryotic proteasomes.

It is found in the cytoplasm. The enzyme catalyses Hydrolysis of proteins to small peptides in the presence of ATP and magnesium. alpha-casein is the usual test substrate. In the absence of ATP, only oligopeptides shorter than five residues are hydrolyzed (such as succinyl-Leu-Tyr-|-NHMec, and Leu-Tyr-Leu-|-Tyr-Trp, in which cleavage of the -Tyr-|-Leu- and -Tyr-|-Trp bonds also occurs).. Cleaves peptides in various proteins in a process that requires ATP hydrolysis. Has a chymotrypsin-like activity. Plays a major role in the degradation of misfolded proteins. In Chlamydia muridarum (strain MoPn / Nigg), this protein is ATP-dependent Clp protease proteolytic subunit 2.